The following is a 238-amino-acid chain: Zwei Ig domain protein zig-2 (238 aa).

Positions 1-17 (MLKFTAISFVLLNAAES) are cleaved as a signal peptide. The Ig-like C2-type 1 domain occupies 31-130 (PLLKFTRTPN…NGLTKLEHVA (100 aa)). N40 and N43 each carry an N-linked (GlcNAc...) asparagine glycan. A disulfide bridge links C54 with C117. N137, N206, and N216 each carry an N-linked (GlcNAc...) asparagine glycan. Residues 149-230 (PFISMTVDFR…NHFGETTAIT (82 aa)) form the Ig-like C2-type 2 domain. A disulfide bridge connects residues C170 and C217.

As to expression, expressed in PVT neurons and weakly in some head neurons.

It is found in the secreted. Functionally, probably not involved in maintaining the position of ASI and ASH head neuron cell bodies and ventral nerve cord axons of PVQ, PVP, RMEV, AVK and HSN neurons. This chain is Zwei Ig domain protein zig-2, found in Caenorhabditis elegans.